The chain runs to 477 residues: Endoglucanase A (477 aa).

An N-terminal signal peptide occupies residues 1–32 (MKNVKKRVGVVLLILAVLGVYMLAMPANTVSA). Glutamate 95 functions as the Proton donor in the catalytic mechanism. Catalysis depends on aspartate 152, which acts as the Nucleophile. Residues 411–477 (PQVVYGDVNG…LIKSIPHLPY (67 aa)) form the Dockerin domain.

This sequence belongs to the glycosyl hydrolase 8 (cellulase D) family.

It carries out the reaction Endohydrolysis of (1-&gt;4)-beta-D-glucosidic linkages in cellulose, lichenin and cereal beta-D-glucans.. In terms of biological role, this enzyme catalyzes the endohydrolysis of 1,4-beta-glucosidic linkages in cellulose, lichenin and cereal beta-D-glucans. This is Endoglucanase A (celA) from Acetivibrio thermocellus (strain ATCC 27405 / DSM 1237 / JCM 9322 / NBRC 103400 / NCIMB 10682 / NRRL B-4536 / VPI 7372) (Clostridium thermocellum).